Here is a 495-residue protein sequence, read N- to C-terminus: Putative aldehyde dehydrogenase DhaS (495 aa).

G244–G249 is a binding site for NAD(+). Catalysis depends on residues E266 and C300.

Belongs to the aldehyde dehydrogenase family.

The enzyme catalyses an aldehyde + NAD(+) + H2O = a carboxylate + NADH + 2 H(+). The chain is Putative aldehyde dehydrogenase DhaS (dhaS) from Bacillus subtilis (strain 168).